The following is an 82-amino-acid chain: Sec-independent protein translocase protein TatA (82 aa).

Residues 1-21 form a helical membrane-spanning segment; sequence MGGISIWQLLIIAVIIVLLFG. The tract at residues 48-82 is disordered; it reads PAKEAKKDADFVPQNLEKKEAETVEKQKQNDKEQA.

The protein belongs to the TatA/E family. The Tat system comprises two distinct complexes: a TatABC complex, containing multiple copies of TatA, TatB and TatC subunits, and a separate TatA complex, containing only TatA subunits. Substrates initially bind to the TatABC complex, which probably triggers association of the separate TatA complex to form the active translocon.

Its subcellular location is the cell inner membrane. Functionally, part of the twin-arginine translocation (Tat) system that transports large folded proteins containing a characteristic twin-arginine motif in their signal peptide across membranes. TatA could form the protein-conducting channel of the Tat system. This chain is Sec-independent protein translocase protein TatA, found in Aliivibrio fischeri (strain ATCC 700601 / ES114) (Vibrio fischeri).